A 287-amino-acid chain; its full sequence is Inorganic pyrophosphatase (287 aa).

Arg79 contributes to the diphosphate binding site. Residues Asp116, Asp121, and Asp153 each contribute to the Mg(2+) site.

Belongs to the PPase family. In terms of assembly, homodimer. Requires Mg(2+) as cofactor.

It localises to the cytoplasm. It catalyses the reaction diphosphate + H2O = 2 phosphate + H(+). The sequence is that of Inorganic pyrophosphatase (IPP1) from Kluyveromyces lactis (strain ATCC 8585 / CBS 2359 / DSM 70799 / NBRC 1267 / NRRL Y-1140 / WM37) (Yeast).